A 384-amino-acid chain; its full sequence is 8-amino-7-oxononanoate synthase (384 aa).

Residue Arg21 participates in substrate binding. 108 to 109 (GF) contributes to the pyridoxal 5'-phosphate binding site. Residue His133 coordinates substrate. Ser179, His207, and Thr233 together coordinate pyridoxal 5'-phosphate. The residue at position 236 (Lys236) is an N6-(pyridoxal phosphate)lysine. Thr352 lines the substrate pocket.

Belongs to the class-II pyridoxal-phosphate-dependent aminotransferase family. BioF subfamily. In terms of assembly, homodimer. It depends on pyridoxal 5'-phosphate as a cofactor.

It carries out the reaction 6-carboxyhexanoyl-[ACP] + L-alanine + H(+) = (8S)-8-amino-7-oxononanoate + holo-[ACP] + CO2. It participates in cofactor biosynthesis; biotin biosynthesis. Catalyzes the decarboxylative condensation of pimeloyl-[acyl-carrier protein] and L-alanine to produce 8-amino-7-oxononanoate (AON), [acyl-carrier protein], and carbon dioxide. The sequence is that of 8-amino-7-oxononanoate synthase from Shigella dysenteriae serotype 1 (strain Sd197).